The primary structure comprises 313 residues: Pyrimidine-specific ribonucleoside hydrolase RihB (313 aa).

D11 functions as the Proton acceptor in the catalytic mechanism. D11, D16, and V124 together coordinate Ca(2+). The substrate site is built by Q227 and H239. D240 serves as a coordination point for Ca(2+).

The protein belongs to the IUNH family. RihB subfamily. As to quaternary structure, homotetramer. Ca(2+) serves as cofactor.

The enzyme catalyses a pyrimidine ribonucleoside + H2O = a pyrimidine nucleobase + D-ribose. Its function is as follows. Hydrolyzes cytidine or uridine to ribose and cytosine or uracil, respectively. Has a clear preference for cytidine over uridine. Strictly specific for ribonucleosides. The protein is Pyrimidine-specific ribonucleoside hydrolase RihB of Escherichia coli O157:H7.